The primary structure comprises 386 residues: LL-diaminopimelate aminotransferase (386 aa).

Tyr-13 and Gly-38 together coordinate substrate. Residues Tyr-67, 101–102 (SK), Tyr-126, Asn-176, Tyr-207, and 235–237 (SLS) contribute to the pyridoxal 5'-phosphate site. Substrate is bound by residues Lys-102, Tyr-126, and Asn-176. Lys-238 carries the post-translational modification N6-(pyridoxal phosphate)lysine. Arg-246 is a pyridoxal 5'-phosphate binding site. Arg-364 is a binding site for substrate.

Belongs to the class-I pyridoxal-phosphate-dependent aminotransferase family. LL-diaminopimelate aminotransferase subfamily. In terms of assembly, homodimer. It depends on pyridoxal 5'-phosphate as a cofactor.

The enzyme catalyses (2S,6S)-2,6-diaminopimelate + 2-oxoglutarate = (S)-2,3,4,5-tetrahydrodipicolinate + L-glutamate + H2O + H(+). Its pathway is amino-acid biosynthesis; L-lysine biosynthesis via DAP pathway; LL-2,6-diaminopimelate from (S)-tetrahydrodipicolinate (aminotransferase route): step 1/1. Functionally, involved in the synthesis of meso-diaminopimelate (m-DAP or DL-DAP), required for both lysine and peptidoglycan biosynthesis. Catalyzes the direct conversion of tetrahydrodipicolinate to LL-diaminopimelate. In Natranaerobius thermophilus (strain ATCC BAA-1301 / DSM 18059 / JW/NM-WN-LF), this protein is LL-diaminopimelate aminotransferase.